The primary structure comprises 247 residues: Auxin-responsive protein IAA13 (247 aa).

Positions 14-18 (LELGL) match the EAR-like (transcriptional repression) motif. Positions 25-40 (GTAAKIGKSGGGGAWG) are enriched in gly residues. Disordered stretches follow at residues 25-44 (GTAA…ERGR) and 49-119 (KDFP…PKDV). A compositionally biased stretch (low complexity) spans 62–75 (SASHAGSSPPRSSS). The segment covering 87 to 98 (RMNSLVNNQATK) has biased composition (polar residues). Residues 106-119 (AGKKKVKDDEPKDV) are compositionally biased toward basic and acidic residues. Positions 129–225 (VGFIKVNMDG…SVKRLRVMKT (97 aa)) constitute a PB1 domain.

The protein belongs to the Aux/IAA family. Homodimers and heterodimers. Interacts with TPL. As to expression, preferentially expressed in stems.

It is found in the nucleus. Aux/IAA proteins are short-lived transcriptional factors that function as repressors of early auxin response genes at low auxin concentrations. Repression is thought to result from the interaction with auxin response factors (ARFs), proteins that bind to the auxin-responsive promoter element (AuxRE). Formation of heterodimers with ARF proteins may alter their ability to modulate early auxin response genes expression. The protein is Auxin-responsive protein IAA13 (IAA13) of Arabidopsis thaliana (Mouse-ear cress).